A 376-amino-acid chain; its full sequence is MKADFYETLGVQKGADEKELKSAFRKLAMQFHPDRNPGDHSCEHKFKEINEAYETLKDPQKRAAYDRFGHAAFEQGGMNGGAQGFGAGGFADIFEDIFGDMMGGRQRRSSGGRERGADLRYNMEISLEEAFAGKTAQIRVPASISCTECSGSGAKPGTQPVTCSMCHGHGKVRATQGFFSIERTCPQCQGRGQTIKDPCPKCAGQGRVTEERSLSVNIPAGIEDGTRIRLANEGEAGLRGGPSGDLYIFLAVKPHEFFQRDGADLYCKVPISMTTAALGGSFEVTTLDGTQTKVKVPEGTQNGRQFRLKGKGMPVLRQPNVGDLYIQTAVETPQNLSRRQRELLEEFEQLSSQDNSPQSSGFFARMKDFFESFGER.

The 66-residue stretch at Asp-4 to Gly-69 folds into the J domain. The CR-type zinc finger occupies Gly-133 to Glu-211. Positions 146, 149, 163, 166, 185, 188, 199, and 202 each coordinate Zn(2+). CXXCXGXG motif repeat units lie at residues Cys-146–Gly-153, Cys-163–Gly-170, Cys-185–Gly-192, and Cys-199–Gly-206.

The protein belongs to the DnaJ family. As to quaternary structure, homodimer. Zn(2+) serves as cofactor.

Its subcellular location is the cytoplasm. Its function is as follows. Participates actively in the response to hyperosmotic and heat shock by preventing the aggregation of stress-denatured proteins and by disaggregating proteins, also in an autonomous, DnaK-independent fashion. Unfolded proteins bind initially to DnaJ; upon interaction with the DnaJ-bound protein, DnaK hydrolyzes its bound ATP, resulting in the formation of a stable complex. GrpE releases ADP from DnaK; ATP binding to DnaK triggers the release of the substrate protein, thus completing the reaction cycle. Several rounds of ATP-dependent interactions between DnaJ, DnaK and GrpE are required for fully efficient folding. Also involved, together with DnaK and GrpE, in the DNA replication of plasmids through activation of initiation proteins. In Mesorhizobium japonicum (strain LMG 29417 / CECT 9101 / MAFF 303099) (Mesorhizobium loti (strain MAFF 303099)), this protein is Chaperone protein DnaJ.